Here is a 344-residue protein sequence, read N- to C-terminus: GDSL esterase/lipase At1g73610 (344 aa).

Positions 1–24 (MNCLMFFKMLLAFSFISLFYVGNA) are cleaved as a signal peptide. A glycan (N-linked (GlcNAc...) asparagine) is linked at N30. S42 acts as the Nucleophile in catalysis. Residues D319 and H322 contribute to the active site.

This sequence belongs to the 'GDSL' lipolytic enzyme family.

Its subcellular location is the secreted. This chain is GDSL esterase/lipase At1g73610, found in Arabidopsis thaliana (Mouse-ear cress).